A 603-amino-acid chain; its full sequence is Serine/threonine-protein kinase PLK1 (603 aa).

The disordered stretch occupies residues 1-35; it reads MSAAVTAGKLARAPADPGKAGVPGVAAPGAPAAAP. Residue Ser2 is modified to N-acetylserine. Position 6 is a phosphothreonine (Thr6). Positions 13–35 are enriched in low complexity; it reads APADPGKAGVPGVAAPGAPAAAP. Lys19 is covalently cross-linked (Glycyl lysine isopeptide (Lys-Gly) (interchain with G-Cter in ubiquitin)). Residues 53 to 305 form the Protein kinase domain; it reads YVRGRFLGKG…INELLNDEFF (253 aa). ATP is bound by residues 59–67 and Lys82; that span reads LGKGGFAKC. Residue Ser103 is modified to Phosphoserine. ATP is bound at residue Glu131. The residue at position 137 (Ser137) is a Phosphoserine. The active-site Proton acceptor is the Asp176. Residues 178 to 181 and Asp194 each bind ATP; that span reads KLGN. An activation loop region spans residues 194–221; that stretch reads DFGLATKVEYDGERKKTLCGTPNYIAPE. Thr210 carries the post-translational modification Phosphothreonine; by AURKA. Thr214 is modified (phosphothreonine). Residue Ser269 is modified to Phosphoserine; by autocatalysis. At Ser335 the chain carries Phosphoserine. Residues 337 to 340 carry the D-box that targets the protein for proteasomal degradation in anaphase motif; that stretch reads RKPL. Lys338 participates in a covalent cross-link: Glycyl lysine isopeptide (Lys-Gly) (interchain with G-Cter in SUMO2). A disordered region spans residues 338–364; sequence KPLTVLNKGLENPLPERPREKEEPVVR. Residues 351 to 364 show a composition bias toward basic and acidic residues; that stretch reads LPERPREKEEPVVR. Ser375 and Ser450 each carry phosphoserine. Positions 410 to 488 constitute a POLO box 1 domain; it reads WVSKWVDYSD…LKYFRNYMSE (79 aa). Lys492 is covalently cross-linked (Glycyl lysine isopeptide (Lys-Gly) (interchain with G-Cter in ubiquitin)). Positions 493–507 are linker; the sequence is AGANITPREGDELAR. Thr498 is subject to Phosphothreonine. Positions 510-592 constitute a POLO box 2 domain; the sequence is YLRTWFRTRS…ARTMVDKLLS (83 aa). The tract at residues 538-540 is important for interaction with phosphorylated proteins; the sequence is HTK.

The protein belongs to the protein kinase superfamily. Ser/Thr protein kinase family. CDC5/Polo subfamily. In terms of assembly, interacts with CEP170. Interacts with EVI5. Interacts with FAM29A. Interacts with SLX4/BTBD12. Interacts with TTDN1. Interacts (via POLO-box domain) with the phosphorylated form of BUB1, CDC25C and CENPU. Interacts with KIF2A. Interacts with CYLD. Part of an astrin (SPAG5)-kinastrin (SKAP) complex containing KNSTRN, SPAG5, PLK1, DYNLL1 and SGO2. Interacts with BIRC6/bruce. Interacts with CDK1-phosphorylated FRY; this interaction occurs in mitotic cells, but not in interphase cells. FRY interaction facilitates AURKA-mediated PLK1 phosphorylation. Interacts with CDK1-phosphorylated DCTN6 during mitotic prometaphase; the interaction facilitates recruitment to kinetochores. Interacts with CEP68; the interaction phosphorylates CEP68. Interacts (via POLO-box domain) with DCTN1. Interacts with CEP20 in later G1, S, G2 and M phases of the cell cycle; this interaction recruits PLK1 to centrosomes, a step required for S phase progression. Interacts with KLHL22. Interacts (via POLO box domains) with NEDD9/HEF1 (via C-terminus). Interacts with FIRRM (via N-terminus region); required for maintaining, but not activating, PLK1 kinase activity. Interacts with FZR1. Interacts with SKA3; the interaction promotes the stability of PLK1; the interaction promotes the stability of PLK1. Interacts with the MTMR3:MTMR4 heterooligomer; brings CEP55 and PLK1 together during early mitosis, regulating the phosphorylation of CEP55 by PLK1 and its recruitment to the midbody where it can mediate cell abscission. Post-translationally, catalytic activity is enhanced by phosphorylation of Thr-210. Phosphorylation at Thr-210 is first detected on centrosomes in the G2 phase of the cell cycle, peaks in prometaphase and gradually disappears from centrosomes during anaphase. Dephosphorylation at Thr-210 at centrosomes is probably mediated by protein phosphatase 1C (PP1C), via interaction with PPP1R12A/MYPT1. Autophosphorylation and phosphorylation of Ser-137 may not be significant for the activation of PLK1 during mitosis, but may enhance catalytic activity during recovery after DNA damage checkpoint. Phosphorylated in vitro by STK10. Ubiquitinated by the anaphase promoting complex/cyclosome (APC/C) in anaphase and following DNA damage, leading to its degradation by the proteasome. Ubiquitination is mediated via its interaction with FZR1/CDH1. Ubiquitination and subsequent degradation prevents entry into mitosis and is essential to maintain an efficient G2 DNA damage checkpoint. Monoubiquitination at Lys-492 by the BCR(KLHL22) ubiquitin ligase complex does not lead to degradation: it promotes PLK1 dissociation from phosphoreceptor proteins and subsequent removal from kinetochores, allowing silencing of the spindle assembly checkpoint (SAC) and chromosome segregation. As to expression, placenta and colon.

The protein resides in the nucleus. Its subcellular location is the chromosome. It localises to the centromere. The protein localises to the kinetochore. It is found in the cytoplasm. The protein resides in the cytoskeleton. Its subcellular location is the microtubule organizing center. It localises to the centrosome. The protein localises to the spindle. It is found in the midbody. The enzyme catalyses L-seryl-[protein] + ATP = O-phospho-L-seryl-[protein] + ADP + H(+). It carries out the reaction L-threonyl-[protein] + ATP = O-phospho-L-threonyl-[protein] + ADP + H(+). With respect to regulation, activated by phosphorylation of Thr-210 by AURKA; phosphorylation by AURKA is enhanced by BORA. Once activated, activity is stimulated by binding target proteins. Binding of target proteins has no effect on the non-activated kinase. Several inhibitors targeting PLKs are currently in development and are under investigation in a growing number of clinical trials, such as BI 2536, an ATP-competitive PLK1 inhibitor or BI 6727, a dihydropteridinone that specifically inhibits the catalytic activity of PLK1. In terms of biological role, serine/threonine-protein kinase that performs several important functions throughout M phase of the cell cycle, including the regulation of centrosome maturation and spindle assembly, the removal of cohesins from chromosome arms, the inactivation of anaphase-promoting complex/cyclosome (APC/C) inhibitors, and the regulation of mitotic exit and cytokinesis. Polo-like kinase proteins act by binding and phosphorylating proteins that are already phosphorylated on a specific motif recognized by the POLO box domains. Phosphorylates BORA, BUB1B/BUBR1, CCNB1, CDC25C, CEP55, ECT2, ERCC6L, FBXO5/EMI1, FOXM1, KIF20A/MKLP2, CENPU, NEDD1, NINL, NPM1, NUDC, PKMYT1/MYT1, KIZ, MRE11, PPP1R12A/MYPT1, POLQ, PRC1, RACGAP1/CYK4, RAD51, RHNO1, SGO1, STAG2/SA2, TEX14, TOPORS, p73/TP73, TPT1, WEE1 and HNRNPU. Plays a key role in centrosome functions and the assembly of bipolar spindles by phosphorylating KIZ, NEDD1 and NINL. NEDD1 phosphorylation promotes subsequent targeting of the gamma-tubulin ring complex (gTuRC) to the centrosome, an important step for spindle formation. Phosphorylation of NINL component of the centrosome leads to NINL dissociation from other centrosomal proteins. Involved in mitosis exit and cytokinesis by phosphorylating CEP55, ECT2, KIF20A/MKLP2, CENPU, PRC1 and RACGAP1. Recruited at the central spindle by phosphorylating and docking PRC1 and KIF20A/MKLP2; creates its own docking sites on PRC1 and KIF20A/MKLP2 by mediating phosphorylation of sites subsequently recognized by the POLO box domains. Phosphorylates RACGAP1, thereby creating a docking site for the Rho GTP exchange factor ECT2 that is essential for the cleavage furrow formation. Promotes the central spindle recruitment of ECT2. Plays a central role in G2/M transition of mitotic cell cycle by phosphorylating CCNB1, CDC25C, FOXM1, CENPU, PKMYT1/MYT1, PPP1R12A/MYPT1 and WEE1. Part of a regulatory circuit that promotes the activation of CDK1 by phosphorylating the positive regulator CDC25C and inhibiting the negative regulators WEE1 and PKMYT1/MYT1. Also acts by mediating phosphorylation of cyclin-B1 (CCNB1) on centrosomes in prophase. Phosphorylates FOXM1, a key mitotic transcription regulator, leading to enhance FOXM1 transcriptional activity. Involved in kinetochore functions and sister chromatid cohesion by phosphorylating BUB1B/BUBR1, FBXO5/EMI1 and STAG2/SA2. PLK1 is high on non-attached kinetochores suggesting a role of PLK1 in kinetochore attachment or in spindle assembly checkpoint (SAC) regulation. Required for kinetochore localization of BUB1B. Regulates the dissociation of cohesin from chromosomes by phosphorylating cohesin subunits such as STAG2/SA2. Phosphorylates SGO1: required for spindle pole localization of isoform 3 of SGO1 and plays a role in regulating its centriole cohesion function. Mediates phosphorylation of FBXO5/EMI1, a negative regulator of the APC/C complex during prophase, leading to FBXO5/EMI1 ubiquitination and degradation by the proteasome. Acts as a negative regulator of p53 family members: phosphorylates TOPORS, leading to inhibit the sumoylation of p53/TP53 and simultaneously enhance the ubiquitination and subsequent degradation of p53/TP53. Phosphorylates the transactivation domain of the transcription factor p73/TP73, leading to inhibit p73/TP73-mediated transcriptional activation and pro-apoptotic functions. Phosphorylates BORA, and thereby promotes the degradation of BORA. Contributes to the regulation of AURKA function. Also required for recovery after DNA damage checkpoint and entry into mitosis. Phosphorylates MISP, leading to stabilization of cortical and astral microtubule attachments required for proper spindle positioning. Together with MEIKIN, acts as a regulator of kinetochore function during meiosis I: required both for mono-orientation of kinetochores on sister chromosomes and protection of centromeric cohesin from separase-mediated cleavage. Phosphorylates CEP68 and is required for its degradation. Regulates nuclear envelope breakdown during prophase by phosphorylating DCTN1 resulting in its localization in the nuclear envelope. Phosphorylates the heat shock transcription factor HSF1, promoting HSF1 nuclear translocation upon heat shock. Phosphorylates HSF1 also in the early mitotic period; this phosphorylation regulates HSF1 localization to the spindle pole, the recruitment of the SCF(BTRC) ubiquitin ligase complex induicing HSF1 degradation, and hence mitotic progression. Regulates mitotic progression by phosphorylating RIOK2. Through the phosphorylation of DZIP1 regulates the localization during mitosis of the BBSome, a ciliary protein complex involved in cilium biogenesis. Regulates DNA repair during mitosis by mediating phosphorylation of POLQ and RHNO1, thereby promoting POLQ recruitment to DNA damage sites. Phosphorylates ATXN10 which may play a role in the regulation of cytokinesis and may stimulate the proteasome-mediated degradation of ATXN10. The chain is Serine/threonine-protein kinase PLK1 (PLK1) from Homo sapiens (Human).